The sequence spans 248 residues: Myelin protein P0 (248 aa).

An N-terminal signal peptide occupies residues 1-29 (MAPGAPSSSPSPILAALLFSSLVLSPALA). The Ig-like V-type domain occupies 30–143 (IVVYTDREIY…DIVGKTSQVT (114 aa)). The Extracellular portion of the chain corresponds to 30-153 (IVVYTDREIY…LYVFEKVPTR (124 aa)). A disulfide bridge connects residues Cys50 and Cys127. Asn122 is a glycosylation site (N-linked (GlcNAc...) (complex) asparagine). The helical transmembrane segment at 154-179 (YGVVLGAVIGGILGVVLLLLLLFYLI) threads the bilayer. Residues 180–248 (RYCWLRRQAA…GLGESRKDKK (69 aa)) are Cytoplasmic-facing. Ser210 bears the Phosphoserine; by PKC mark. A disordered region spans residues 222-248 (MLDHSRSTKAASEKKSKGLGESRKDKK). Residues 224 to 248 (DHSRSTKAASEKKSKGLGESRKDKK) show a composition bias toward basic and acidic residues. 2 positions are modified to phosphoserine: Ser226 and Ser228. Residue Ser233 is modified to Phosphoserine; by PKC. Ser237 and Ser243 each carry phosphoserine.

The protein belongs to the myelin P0 protein family. In terms of assembly, homodimer and homotetramer. Post-translationally, N-glycosylated; contains sulfate-substituted glycan. In terms of tissue distribution, found only in peripheral nervous system Schwann cells.

The protein localises to the cell membrane. Its function is as follows. Is an adhesion molecule necessary for normal myelination in the peripheral nervous system. It mediates adhesion between adjacent myelin wraps and ultimately drives myelin compaction. The protein is Myelin protein P0 (Mpz) of Mus musculus (Mouse).